Reading from the N-terminus, the 206-residue chain is Probable glutathione S-transferase 7 (206 aa).

In terms of domain architecture, GST N-terminal spans 2–79 (VHYKVSYFPI…YLARQFGING (78 aa)). Glutathione is bound by residues tyrosine 8, tryptophan 39, lysine 43, 49–51 (GQL), and 63–64 (QS). Residues 81–206 (CAWEEAQVNS…WLETRPVTPF (126 aa)) enclose the GST C-terminal domain.

Belongs to the GST superfamily. Sigma family.

It carries out the reaction RX + glutathione = an S-substituted glutathione + a halide anion + H(+). In terms of biological role, conjugation of reduced glutathione to a wide number of exogenous and endogenous hydrophobic electrophiles. May play a role in the detoxification of reactive oxygen species produced during pathogenic bacterial infection. The chain is Probable glutathione S-transferase 7 (gst-7) from Caenorhabditis elegans.